The primary structure comprises 276 residues: Adenylate kinase (276 aa).

38–43 (GSGKGT) provides a ligand contact to ATP. Residues 58 to 87 (STGDMLRAAIEQGTETGKQAKTIMDQGGLV) are NMP. AMP contacts are provided by residues T59, R64, 85-87 (GLV), 113-116 (GFPR), and Q120. The tract at residues 154-191 (GRLVHPSSGRSYHREFFPPKVDMIDDITGEPLIQRSDD) is LID. ATP is bound by residues R155 and 164-165 (SY). The AMP site is built by R188 and R199. K227 contributes to the ATP binding site.

Belongs to the adenylate kinase family. AK2 subfamily. In terms of assembly, monomer.

Its subcellular location is the cytoplasm. It localises to the cytosol. The protein localises to the mitochondrion intermembrane space. It carries out the reaction AMP + ATP = 2 ADP. In terms of biological role, catalyzes the reversible transfer of the terminal phosphate group between ATP and AMP. Plays an important role in cellular energy homeostasis and in adenine nucleotide metabolism. Adenylate kinase activity is critical for regulation of the phosphate utilization and the AMP de novo biosynthesis pathways. This is Adenylate kinase (adkA) from Dictyostelium discoideum (Social amoeba).